Here is a 176-residue protein sequence, read N- to C-terminus: Retinol-binding protein 4-A (176 aa).

Ser-1 bears the N-acetylserine mark. 3 disulfides stabilise this stretch: Cys-3-Cys-159, Cys-69-Cys-173, and Cys-119-Cys-128. Residue Gln-97 participates in substrate binding.

The protein belongs to the calycin superfamily. Lipocalin family.

It is found in the secreted. In terms of biological role, RBP delivers retinol from the liver stores to the peripheral tissues. In plasma, the RBP-retinol complex interacts with transthyretin, this prevents its loss by filtration through the kidney glomeruli. The polypeptide is Retinol-binding protein 4-A (rbp4a) (Oncorhynchus mykiss (Rainbow trout)).